The sequence spans 148 residues: Nucleoside diphosphate kinase (148 aa).

ATP contacts are provided by K9, F57, R85, T91, R102, and N112. H115 (pros-phosphohistidine intermediate) is an active-site residue.

The protein belongs to the NDK family. Mg(2+) is required as a cofactor.

The enzyme catalyses a 2'-deoxyribonucleoside 5'-diphosphate + ATP = a 2'-deoxyribonucleoside 5'-triphosphate + ADP. The catalysed reaction is a ribonucleoside 5'-diphosphate + ATP = a ribonucleoside 5'-triphosphate + ADP. In terms of biological role, major role in the synthesis of nucleoside triphosphates other than ATP. The ATP gamma phosphate is transferred to the NDP beta phosphate via a ping-pong mechanism, using a phosphorylated active-site intermediate. This Helianthus annuus (Common sunflower) protein is Nucleoside diphosphate kinase.